Here is a 108-residue protein sequence, read N- to C-terminus: DNA-binding protein HBbu (108 aa).

Belongs to the bacterial histone-like protein family.

In terms of biological role, histone-like DNA-binding protein which is capable of wrapping DNA to stabilize it, and thus to prevent its denaturation under extreme environmental conditions. The polypeptide is DNA-binding protein HBbu (hbb) (Borreliella japonica (Borrelia japonica)).